A 222-amino-acid polypeptide reads, in one-letter code: GTP cyclohydrolase 1 (222 aa).

Cys-111, His-114, and Cys-182 together coordinate Zn(2+).

This sequence belongs to the GTP cyclohydrolase I family. As to quaternary structure, homomer.

It carries out the reaction GTP + H2O = 7,8-dihydroneopterin 3'-triphosphate + formate + H(+). It participates in cofactor biosynthesis; 7,8-dihydroneopterin triphosphate biosynthesis; 7,8-dihydroneopterin triphosphate from GTP: step 1/1. The sequence is that of GTP cyclohydrolase 1 from Klebsiella pneumoniae (strain 342).